The sequence spans 128 residues: Small ribosomal subunit protein bS6 (128 aa).

It belongs to the bacterial ribosomal protein bS6 family.

Its function is as follows. Binds together with bS18 to 16S ribosomal RNA. The chain is Small ribosomal subunit protein bS6 from Nitratiruptor sp. (strain SB155-2).